We begin with the raw amino-acid sequence, 787 residues long: LPS-assembly protein LptD (787 aa).

An N-terminal signal peptide occupies residues 1–39; it reads MPPKTLFPLVPACDAAPRKKRLAVALLAVPGLVPAVSQA.

This sequence belongs to the LptD family. As to quaternary structure, component of the lipopolysaccharide transport and assembly complex. Interacts with LptE and LptA.

Its subcellular location is the cell outer membrane. Functionally, together with LptE, is involved in the assembly of lipopolysaccharide (LPS) at the surface of the outer membrane. This chain is LPS-assembly protein LptD, found in Burkholderia pseudomallei (strain 1710b).